A 366-amino-acid polypeptide reads, in one-letter code: GTPase Obg (366 aa).

Residues 1 to 161 (MRFVDEARIQ…FNLRLELKIL (161 aa)) enclose the Obg domain. The tract at residues 121 to 148 (SGGRGGKGNEHFKSSTMRAPRFSQPGEP) is disordered. Residues 162 to 334 (ADAGLIGLPN…LVQELWQVCE (173 aa)) form the OBG-type G domain. GTP contacts are provided by residues 168-175 (GLPNAGKS), 193-197 (FTTLT), 217-220 (DIPG), 287-290 (NKID), and 315-317 (SAR). 2 residues coordinate Mg(2+): Ser175 and Thr195.

Belongs to the TRAFAC class OBG-HflX-like GTPase superfamily. OBG GTPase family. Monomer. It depends on Mg(2+) as a cofactor.

The protein resides in the cytoplasm. Its function is as follows. An essential GTPase which binds GTP, GDP and possibly (p)ppGpp with moderate affinity, with high nucleotide exchange rates and a fairly low GTP hydrolysis rate. Plays a role in control of the cell cycle, stress response, ribosome biogenesis and in those bacteria that undergo differentiation, in morphogenesis control. The polypeptide is GTPase Obg (Desulfovibrio desulfuricans (strain ATCC 27774 / DSM 6949 / MB)).